We begin with the raw amino-acid sequence, 1009 residues long: Type VII secretion system accessory factor EsaA (1009 aa).

A run of 6 helical transmembrane segments spans residues 7–27, 822–842, 869–889, 903–923, 928–948, and 979–999; these read IYAL…IFFV, ISPT…AYIF, VITS…VGLI, KFIL…TYLL, SIGM…MNNL, and IGLA…LNMF.

Belongs to the EsaA family. In terms of assembly, homodimer. Interacts with EssB.

It localises to the cell membrane. Its function is as follows. Component of the type VII secretion system (Ess). Provides together with EssB and other components such as EssC and EssE a secretion platform across the cytoplasmic membrane in the host. The sequence is that of Type VII secretion system accessory factor EsaA from Staphylococcus aureus (strain MSSA476).